The following is a 330-amino-acid chain: Probable WRKY transcription factor 39 (330 aa).

A DNA-binding region (WRKY) is located at residues 256-322 (KIADIPPDEY…YEGEHNHSRI (67 aa)).

It is found in the nucleus. Its function is as follows. Transcription factor. Interacts specifically with the W box (5'-(T)TGAC[CT]-3'), a frequently occurring elicitor-responsive cis-acting element. The sequence is that of Probable WRKY transcription factor 39 (WRKY39) from Arabidopsis thaliana (Mouse-ear cress).